A 380-amino-acid chain; its full sequence is Cytochrome b (380 aa).

4 helical membrane passes run 33–53 (FGSL…FLAM), 77–98 (WLIR…YLHI), 113–133 (WNVG…GYVL), and 178–198 (FFAF…IHLI). Heme b-binding residues include His-83 and His-97. His-182 and His-196 together coordinate heme b. Position 201 (His-201) interacts with a ubiquinone. 4 consecutive transmembrane segments (helical) span residues 226-246 (YKDL…ALFS), 288-308 (LGGV…PILH), 320-340 (FSQF…WIGG), and 347-367 (FVII…VMIP).

The protein belongs to the cytochrome b family. The cytochrome bc1 complex contains 3 respiratory subunits (MT-CYB, CYC1 and UQCRFS1), 2 core proteins (UQCRC1 and UQCRC2) and probably 6 low-molecular weight proteins. It depends on heme b as a cofactor.

The protein localises to the mitochondrion inner membrane. Component of the ubiquinol-cytochrome c reductase complex (complex III or cytochrome b-c1 complex) that is part of the mitochondrial respiratory chain. The b-c1 complex mediates electron transfer from ubiquinol to cytochrome c. Contributes to the generation of a proton gradient across the mitochondrial membrane that is then used for ATP synthesis. This chain is Cytochrome b (mt-cyb), found in Paralichthys olivaceus (Bastard halibut).